The following is a 428-amino-acid chain: Glutamine synthetase, chloroplastic (428 aa).

A chloroplast-targeting transit peptide spans 1-48 (MAQAVVPAMQCQVGAVRARPAAAAAAAGGRVWGVRRTGRGTSGFRVMA). The GS beta-grasp domain occupies 75–155 (IIAEYIWVGG…VMCDTYTPAG (81 aa)). A disordered region spans residues 95–120 (TISKPVEDPSELPKWNYDGSSTGQAP). The GS catalytic domain maps to 159–428 (PTNKRNRAAQ…LAAKKLALKV (270 aa)).

Belongs to the glutamine synthetase family. In terms of assembly, homooctamer.

The protein localises to the plastid. It is found in the chloroplast. The catalysed reaction is L-glutamate + NH4(+) + ATP = L-glutamine + ADP + phosphate + H(+). Its function is as follows. Light-modulated chloroplastic glutamine synthetase, encoded by a nuclear gene and expressed primarily in leaves, and which is responsible for the reassimilation of the ammonia generated by photorespiration. In Oryza sativa subsp. japonica (Rice), this protein is Glutamine synthetase, chloroplastic.